Here is a 612-residue protein sequence, read N- to C-terminus: Rhamnogalacturonan exolyase YesX (612 aa).

Residue Asn-119 participates in substrate binding. Residues Asp-120, Asp-125, Asp-127, Asp-129, Glu-131, and Glu-133 each contribute to the Ca(2+) site. Asp-139, Glu-154, and Arg-174 together coordinate substrate. Ca(2+) is bound by residues Asp-189, Asp-191, Asp-193, Lys-195, and Glu-197. The substrate site is built by Gly-205 and Arg-222. Residues His-330, Asp-336, Asp-338, Asp-340, Lys-342, Glu-344, Asp-353, His-354, His-366, Asp-368, Asp-374, Asp-376, Arg-379, Gly-381, Glu-383, and Glu-389 each contribute to the Ca(2+) site. Arg-419 provides a ligand contact to substrate. The Ca(2+) site is built by Asp-472, Asp-474, Val-476, and Glu-478. 516-518 (NGT) lines the substrate pocket. Ca(2+)-binding residues include Asn-527, Phe-529, Asp-531, Arg-533, Glu-535, Asn-576, and Ala-578. Substrate is bound at residue Tyr-579. Asn-580 lines the Ca(2+) pocket.

The protein belongs to the polysaccharide lyase 11 family. In terms of assembly, monomer. Mn(2+) is required as a cofactor. Zn(2+) serves as cofactor. It depends on Co(2+) as a cofactor. The cofactor is Ca(2+).

It localises to the secreted. The enzyme catalyses Exotype eliminative cleavage of alpha-L-rhamnopyranosyl-(1-&gt;4)-alpha-D-galactopyranosyluronic acid bonds of rhamnogalacturonan I oligosaccharides containing alpha-L-rhamnopyranose at the reducing end and 4-deoxy-4,5-unsaturated D-galactopyranosyluronic acid at the non-reducing end. The products are the disaccharide 2-O-(4-deoxy-beta-L-threo-hex-4-enopyranuronosyl)-alpha-L-rhamnopyranose and the shortened rhamnogalacturonan oligosaccharide containing one 4-deoxy-4,5-unsaturated D-galactopyranosyluronic acid at the non-reducing end.. Pectinolytic enzyme that degrades type I rhamnogalacturonan from plant cell walls and releases disaccharide products. Degrades rhamnogalacturonan, polygalacturonic acid and pectic acid. Has very low activity on pectin. The sequence is that of Rhamnogalacturonan exolyase YesX (yesX) from Bacillus subtilis (strain 168).